The sequence spans 821 residues: E3 ubiquitin-protein ligase RSP5 (821 aa).

One can recognise a C2 domain in the interval 1–112 (MGSNLPAQPN…QMGGDEMLTR (112 aa)). Composition is skewed to polar residues over residues 133–144 (TNLSTPNPNQAN) and 188–201 (LNPQ…RPTS). Disordered regions lie at residues 133–239 (TNLS…GWER) and 255–359 (RTTT…YFVD). The segment covering 202–217 (QIAPPNGAPPIANGQG) has biased composition (low complexity). The region spanning 231–264 (GRLPAGWERREDNLGRTYYVDHNTRTTTWNRPSA) is the WW 1 domain. The span at 255–272 (RTTTWNRPSANYNEQTQR) shows a compositional bias: polar residues. The segment covering 281–296 (LERRAHQNRMLPEDRT) has biased composition (basic and acidic residues). Residues 297–312 (GASSPNLSETQPQAQT) are compositionally biased toward polar residues. Positions 320 to 339 (ASNSNVVSMMATGATTAGTG) are enriched in low complexity. WW domains follow at residues 339 to 372 (GELP…DPRR) and 399 to 432 (GPLP…DPRL). In terms of domain architecture, HECT spans 488–821 (SASDLKKRLM…VEETLGFGQE (334 aa)). The active-site Glycyl thioester intermediate is Cys789.

It belongs to the RSP5/NEDD4 family. As to quaternary structure, interacts with apyA and creD.

It is found in the cytoplasm. It carries out the reaction S-ubiquitinyl-[E2 ubiquitin-conjugating enzyme]-L-cysteine + [acceptor protein]-L-lysine = [E2 ubiquitin-conjugating enzyme]-L-cysteine + N(6)-ubiquitinyl-[acceptor protein]-L-lysine.. Its pathway is protein modification; protein ubiquitination. In terms of biological role, E3 ubiquitin-protein ligase which accepts ubiquitin from an E2 ubiquitin-conjugating enzyme in the form of a thioester and then directly transfers the ubiquitin to targeted substrates. Probably involved in the regulatory network controlling carbon source utilization. Ubiquitinates 'Lys-528' of the uric acid/xanthine transporter uapA at the cell membrane, leading to its internalization, sorting into the endosomal pathway to the vacuolar lumen where it is eventually degraded. The sequence is that of E3 ubiquitin-protein ligase RSP5 (hulA) from Emericella nidulans (strain FGSC A4 / ATCC 38163 / CBS 112.46 / NRRL 194 / M139) (Aspergillus nidulans).